The sequence spans 334 residues: Biotin synthase (334 aa).

The Radical SAM core domain maps to 55-280 (EEIEVEGIIS…HTMLRFAGGR (226 aa)). [4Fe-4S] cluster-binding residues include C70, C74, and C77. Residues C113, C205, and R275 each coordinate [2Fe-2S] cluster.

Belongs to the radical SAM superfamily. Biotin synthase family. As to quaternary structure, homodimer. It depends on [4Fe-4S] cluster as a cofactor. [2Fe-2S] cluster is required as a cofactor.

The catalysed reaction is (4R,5S)-dethiobiotin + (sulfur carrier)-SH + 2 reduced [2Fe-2S]-[ferredoxin] + 2 S-adenosyl-L-methionine = (sulfur carrier)-H + biotin + 2 5'-deoxyadenosine + 2 L-methionine + 2 oxidized [2Fe-2S]-[ferredoxin]. It functions in the pathway cofactor biosynthesis; biotin biosynthesis; biotin from 7,8-diaminononanoate: step 2/2. Functionally, catalyzes the conversion of dethiobiotin (DTB) to biotin by the insertion of a sulfur atom into dethiobiotin via a radical-based mechanism. In Corynebacterium glutamicum (strain ATCC 13032 / DSM 20300 / JCM 1318 / BCRC 11384 / CCUG 27702 / LMG 3730 / NBRC 12168 / NCIMB 10025 / NRRL B-2784 / 534), this protein is Biotin synthase.